The sequence spans 66 residues: Large ribosomal subunit protein bL35 (66 aa).

The protein belongs to the bacterial ribosomal protein bL35 family.

The chain is Large ribosomal subunit protein bL35 from Caulobacter sp. (strain K31).